The chain runs to 92 residues: Large ribosomal subunit protein uL24 (92 aa).

Belongs to the universal ribosomal protein uL24 family. As to quaternary structure, part of the 50S ribosomal subunit.

In terms of biological role, one of two assembly initiator proteins, it binds directly to the 5'-end of the 23S rRNA, where it nucleates assembly of the 50S subunit. Its function is as follows. One of the proteins that surrounds the polypeptide exit tunnel on the outside of the subunit. The polypeptide is Large ribosomal subunit protein uL24 (Opitutus terrae (strain DSM 11246 / JCM 15787 / PB90-1)).